A 95-amino-acid polypeptide reads, in one-letter code: Glycophorin-C (95 aa).

Topologically, residues M1–E25 are extracellular. The helical; Signal-anchor for type III membrane protein transmembrane segment at I26–L46 threads the bilayer. The Cytoplasmic portion of the chain corresponds to M47–I95. 3 positions are modified to phosphoserine: S71, S78, and S89.

Belongs to the glycophorin-C family.

It localises to the cell membrane. This is Glycophorin-C (Gypc) from Rattus norvegicus (Rat).